A 493-amino-acid polypeptide reads, in one-letter code: Inosine-5'-monophosphate dehydrogenase (493 aa).

2 CBS domains span residues 97–155 (VIID…NAPI) and 159–219 (MTSE…AKDE). Residues Asp253 and 303-305 (GIG) each bind NAD(+). Gly305 and Gly307 together coordinate K(+). Residue Ser308 coordinates IMP. Cys310 lines the K(+) pocket. Cys310 functions as the Thioimidate intermediate in the catalytic mechanism. Residues 343 to 345 (DGG), 366 to 367 (GS), and 390 to 394 (YRGMG) contribute to the IMP site. Arg406 serves as the catalytic Proton acceptor. Glu421 is an IMP binding site. The K(+) site is built by Glu475, Ser476, and His477.

The protein belongs to the IMPDH/GMPR family. Homotetramer. K(+) is required as a cofactor.

The catalysed reaction is IMP + NAD(+) + H2O = XMP + NADH + H(+). It participates in purine metabolism; XMP biosynthesis via de novo pathway; XMP from IMP: step 1/1. Its activity is regulated as follows. Mycophenolic acid (MPA) is a non-competitive inhibitor that prevents formation of the closed enzyme conformation by binding to the same site as the amobile flap. In contrast, mizoribine monophosphate (MZP) is a competitive inhibitor that induces the closed conformation. MPA is a potent inhibitor of mammalian IMPDHs but a poor inhibitor of the bacterial enzymes. MZP is a more potent inhibitor of bacterial IMPDH. In terms of biological role, catalyzes the conversion of inosine 5'-phosphate (IMP) to xanthosine 5'-phosphate (XMP), the first committed and rate-limiting step in the de novo synthesis of guanine nucleotides, and therefore plays an important role in the regulation of cell growth. This Streptococcus pyogenes serotype M3 (strain ATCC BAA-595 / MGAS315) protein is Inosine-5'-monophosphate dehydrogenase.